Reading from the N-terminus, the 402-residue chain is 3-isopropylmalate dehydratase large subunit 2 (402 aa).

Residues C280, C341, and C344 each contribute to the [4Fe-4S] cluster site.

This sequence belongs to the aconitase/IPM isomerase family. LeuC type 2 subfamily. Heterodimer of LeuC and LeuD. Requires [4Fe-4S] cluster as cofactor.

It catalyses the reaction (2R,3S)-3-isopropylmalate = (2S)-2-isopropylmalate. It participates in amino-acid biosynthesis; L-leucine biosynthesis; L-leucine from 3-methyl-2-oxobutanoate: step 2/4. In terms of biological role, catalyzes the isomerization between 2-isopropylmalate and 3-isopropylmalate, via the formation of 2-isopropylmaleate. In Methanopyrus kandleri (strain AV19 / DSM 6324 / JCM 9639 / NBRC 100938), this protein is 3-isopropylmalate dehydratase large subunit 2.